Reading from the N-terminus, the 102-residue chain is P antigen family member 4 (102 aa).

Basic residues predominate over residues Met1–Arg10. A disordered region spans residues Met1–Pro102. Ser7 is subject to Phosphoserine; by CLK2. At Ser9 the chain carries Phosphoserine; by HIPK1 and CLK2. Basic and acidic residues predominate over residues Gly45–Thr85. Thr51 is modified (phosphothreonine; by HIPK1 and CLK2). The residue at position 71 (Thr71) is a Phosphothreonine; by CLK2. Ser73 and Ser79 each carry phosphoserine; by CLK2. Residues Thr85 and Thr94 each carry the phosphothreonine; by CLK2 modification.

The protein belongs to the GAGE family. As to quaternary structure, interacts with JUN. HIPK1-mediated phosphorylation at Thr-51 leads to the compaction of its intrinsically disordered conformation and is critical for its ability to potentiate the transcriptional activator activity of JUN inspite of a reduced interaction with JUN. CLK2-mediated phosphorylation at multiple Ser and Thr residues attenuates its ability to potentiate JUN transcriptional activator activity. As to expression, expressed at basal lvels in the adult normal prostate gland but is highly up-regulated in the fetal prostate and prostate cancer cells. Preferentially expressed in normal male and female reproductive tissues, testis, fallopian tube, uterus, and placenta, as well as in testicular cancer, uterine cancer, cervical cancer and kidney cancer.

It localises to the cytoplasm. It is found in the nucleus. Its subcellular location is the mitochondrion. In terms of biological role, intrinsically disordered protein that potentiates the transcriptional activator activity of JUN. Protects cells from stress-induced apoptosis by inhibiting reactive oxygen species (ROS) production and via regulation of the MAPK signaling pathway. The sequence is that of P antigen family member 4 (PAGE4) from Homo sapiens (Human).